We begin with the raw amino-acid sequence, 188 residues long: UPF0232 protein RHA1_ro03670 (188 aa).

3 disordered regions span residues 1–20, 31–78, and 166–188; these read MTDD…PEVK, EARA…QPFG, and PTAP…DTYG. The segment covering 7 to 16 has biased composition (low complexity); that stretch reads PTAPAAAAPE.

Belongs to the UPF0232 family.

The sequence is that of UPF0232 protein RHA1_ro03670 from Rhodococcus jostii (strain RHA1).